A 68-amino-acid polypeptide reads, in one-letter code: MPKLKTKSAVKKRFKLTATGKVIASQAGKKHFMRRRTKAQIRNLRGTTILCPKDGYNIKKYFLPYGIN.

The protein belongs to the bacterial ribosomal protein bL35 family.

The chain is Large ribosomal subunit protein bL35 from Rickettsia akari (strain Hartford).